Reading from the N-terminus, the 430-residue chain is Histidine--tRNA ligase, chloroplastic (430 aa).

This sequence belongs to the class-II aminoacyl-tRNA synthetase family.

The protein localises to the plastid. The protein resides in the chloroplast. It catalyses the reaction tRNA(His) + L-histidine + ATP = L-histidyl-tRNA(His) + AMP + diphosphate + H(+). In Pyropia yezoensis (Susabi-nori), this protein is Histidine--tRNA ligase, chloroplastic.